We begin with the raw amino-acid sequence, 360 residues long: Photosystem II protein D1 (360 aa).

3 helical membrane passes run 29–46, 118–133, and 142–156; these read YIGWFGVLMIPTLLTATS, HFFIGICAYMGREWEL, and WIAVAFSAPVAAATA. Residue histidine 118 coordinates chlorophyll a. Tyrosine 126 is a pheophytin a binding site. Positions 170 and 189 each coordinate [CaMn4O5] cluster. A helical transmembrane segment spans residues 197-218; sequence FHMMGVAGVFGGSLFSAMHGSL. Histidine 198 provides a ligand contact to chlorophyll a. A quinone contacts are provided by residues histidine 215 and 264 to 265; that span reads SF. Position 215 (histidine 215) interacts with Fe cation. Histidine 272 lines the Fe cation pocket. The chain crosses the membrane as a helical span at residues 274 to 288; that stretch reads FLALWPVVCICVTAL. [CaMn4O5] cluster is bound by residues histidine 332, glutamate 333, aspartate 342, and alanine 344. A propeptide spanning residues 345 to 360 is cleaved from the precursor; that stretch reads SEVSLPVALNKVEING.

Belongs to the reaction center PufL/M/PsbA/D family. As to quaternary structure, PSII is composed of 1 copy each of membrane proteins PsbA, PsbB, PsbC, PsbD, PsbE, PsbF, PsbH, PsbI, PsbJ, PsbK, PsbL, PsbM, PsbT, PsbY, PsbZ, Psb30/Ycf12, at least 3 peripheral proteins of the oxygen-evolving complex and a large number of cofactors. It forms dimeric complexes. The cofactor is The D1/D2 heterodimer binds P680, chlorophylls that are the primary electron donor of PSII, and subsequent electron acceptors. It shares a non-heme iron and each subunit binds pheophytin, quinone, additional chlorophylls, carotenoids and lipids. D1 provides most of the ligands for the Mn4-Ca-O5 cluster of the oxygen-evolving complex (OEC). There is also a Cl(-1) ion associated with D1 and D2, which is required for oxygen evolution. The PSII complex binds additional chlorophylls, carotenoids and specific lipids.. Post-translationally, tyr-161 forms a radical intermediate that is referred to as redox-active TyrZ, YZ or Y-Z. C-terminally processed by CTPA; processing is essential to allow assembly of the oxygen-evolving complex and thus photosynthetic growth.

It localises to the plastid. It is found in the chloroplast thylakoid membrane. The enzyme catalyses 2 a plastoquinone + 4 hnu + 2 H2O = 2 a plastoquinol + O2. Photosystem II (PSII) is a light-driven water:plastoquinone oxidoreductase that uses light energy to abstract electrons from H(2)O, generating O(2) and a proton gradient subsequently used for ATP formation. It consists of a core antenna complex that captures photons, and an electron transfer chain that converts photonic excitation into a charge separation. The D1/D2 (PsbA/PsbD) reaction center heterodimer binds P680, the primary electron donor of PSII as well as several subsequent electron acceptors. The sequence is that of Photosystem II protein D1 from Galdieria sulphuraria (Red alga).